Consider the following 73-residue polypeptide: Small ribosomal subunit protein bS18 (73 aa).

Belongs to the bacterial ribosomal protein bS18 family. As to quaternary structure, part of the 30S ribosomal subunit. Forms a tight heterodimer with protein bS6.

Functionally, binds as a heterodimer with protein bS6 to the central domain of the 16S rRNA, where it helps stabilize the platform of the 30S subunit. The chain is Small ribosomal subunit protein bS18 from Prochlorococcus marinus (strain MIT 9313).